Here is a 397-residue protein sequence, read N- to C-terminus: Succinyl-diaminopimelate desuccinylase (397 aa).

A Zn(2+)-binding site is contributed by H73. The active site involves D75. D106 is a Zn(2+) binding site. The active-site Proton acceptor is E140. E141, E169, and H366 together coordinate Zn(2+).

It belongs to the peptidase M20A family. DapE subfamily. Homodimer. Requires Zn(2+) as cofactor. Co(2+) serves as cofactor.

The catalysed reaction is N-succinyl-(2S,6S)-2,6-diaminopimelate + H2O = (2S,6S)-2,6-diaminopimelate + succinate. The protein operates within amino-acid biosynthesis; L-lysine biosynthesis via DAP pathway; LL-2,6-diaminopimelate from (S)-tetrahydrodipicolinate (succinylase route): step 3/3. Catalyzes the hydrolysis of N-succinyl-L,L-diaminopimelic acid (SDAP), forming succinate and LL-2,6-diaminopimelate (DAP), an intermediate involved in the bacterial biosynthesis of lysine and meso-diaminopimelic acid, an essential component of bacterial cell walls. This Rhizobium johnstonii (strain DSM 114642 / LMG 32736 / 3841) (Rhizobium leguminosarum bv. viciae) protein is Succinyl-diaminopimelate desuccinylase.